We begin with the raw amino-acid sequence, 211 residues long: MRVRKRKGAQEHLENNPHYVILEPEAAKGRWCEVFGNDHPIHIEVGSGKGAFITGMALKNPEINYIGIDIQLSVLSYALDKVLASQAPNVRLLRVDGSSLTNYFDAGEIDMMYLNFSDPWPKSRHEKRRLTHRSFLDTYKQILPENGEIHFKTDNRGLFEYSLASFSQYGMTLKQVWLDLHASDYQGNVMTEYEARFAKKGQVIYRLEATF.

4 residues coordinate S-adenosyl-L-methionine: Glu-44, Asp-69, Asp-96, and Asp-118. Asp-118 is a catalytic residue. Lys-122 serves as a coordination point for substrate. The interaction with RNA stretch occupies residues 124–129; it reads RHEKRR. Residues Asp-154 and 191 to 194 contribute to the substrate site; that span reads TEYE.

This sequence belongs to the class I-like SAM-binding methyltransferase superfamily. TrmB family.

It carries out the reaction guanosine(46) in tRNA + S-adenosyl-L-methionine = N(7)-methylguanosine(46) in tRNA + S-adenosyl-L-homocysteine. Its pathway is tRNA modification; N(7)-methylguanine-tRNA biosynthesis. In terms of biological role, catalyzes the formation of N(7)-methylguanine at position 46 (m7G46) in tRNA. The sequence is that of tRNA (guanine-N(7)-)-methyltransferase from Streptococcus equi subsp. zooepidemicus (strain H70).